The chain runs to 215 residues: NAD(P)H-quinone oxidoreductase subunit I (215 aa).

2 consecutive 4Fe-4S ferredoxin-type domains span residues 55–84 (GRIH…VDWV) and 95–124 (RNYS…MTEE). Residues cysteine 64, cysteine 67, cysteine 70, cysteine 74, cysteine 104, cysteine 107, cysteine 110, and cysteine 114 each coordinate [4Fe-4S] cluster. The segment covering 169-180 (MDPHGVASDRPR) has biased composition (basic and acidic residues). Residues 169 to 215 (MDPHGVASDRPRAGQLPAQVLETLTPPAKPTAKNDGQSSSEAKEGDA) form a disordered region.

The protein belongs to the complex I 23 kDa subunit family. NDH-1 is composed of at least 11 different subunits. The cofactor is [4Fe-4S] cluster.

Its subcellular location is the cellular thylakoid membrane. The catalysed reaction is a plastoquinone + NADH + (n+1) H(+)(in) = a plastoquinol + NAD(+) + n H(+)(out). It carries out the reaction a plastoquinone + NADPH + (n+1) H(+)(in) = a plastoquinol + NADP(+) + n H(+)(out). NDH-1 shuttles electrons from an unknown electron donor, via FMN and iron-sulfur (Fe-S) centers, to quinones in the respiratory and/or the photosynthetic chain. The immediate electron acceptor for the enzyme in this species is believed to be plastoquinone. Couples the redox reaction to proton translocation, and thus conserves the redox energy in a proton gradient. The sequence is that of NAD(P)H-quinone oxidoreductase subunit I from Synechococcus sp. (strain CC9605).